Here is a 259-residue protein sequence, read N- to C-terminus: Imidazole glycerol phosphate synthase subunit HisF (259 aa).

Catalysis depends on residues D11 and D130.

This sequence belongs to the HisA/HisF family. In terms of assembly, heterodimer of HisH and HisF.

It localises to the cytoplasm. It catalyses the reaction 5-[(5-phospho-1-deoxy-D-ribulos-1-ylimino)methylamino]-1-(5-phospho-beta-D-ribosyl)imidazole-4-carboxamide + L-glutamine = D-erythro-1-(imidazol-4-yl)glycerol 3-phosphate + 5-amino-1-(5-phospho-beta-D-ribosyl)imidazole-4-carboxamide + L-glutamate + H(+). It participates in amino-acid biosynthesis; L-histidine biosynthesis; L-histidine from 5-phospho-alpha-D-ribose 1-diphosphate: step 5/9. Its function is as follows. IGPS catalyzes the conversion of PRFAR and glutamine to IGP, AICAR and glutamate. The HisF subunit catalyzes the cyclization activity that produces IGP and AICAR from PRFAR using the ammonia provided by the HisH subunit. The chain is Imidazole glycerol phosphate synthase subunit HisF from Acidovorax ebreus (strain TPSY) (Diaphorobacter sp. (strain TPSY)).